The chain runs to 287 residues: ATP synthase gamma chain (287 aa).

Belongs to the ATPase gamma chain family. In terms of assembly, F-type ATPases have 2 components, CF(1) - the catalytic core - and CF(0) - the membrane proton channel. CF(1) has five subunits: alpha(3), beta(3), gamma(1), delta(1), epsilon(1). CF(0) has three main subunits: a, b and c.

The protein localises to the cell inner membrane. Its function is as follows. Produces ATP from ADP in the presence of a proton gradient across the membrane. The gamma chain is believed to be important in regulating ATPase activity and the flow of protons through the CF(0) complex. The chain is ATP synthase gamma chain from Klebsiella pneumoniae (strain 342).